The primary structure comprises 309 residues: Dihydroorotate dehydrogenase B (NAD(+)), catalytic subunit (309 aa).

FMN is bound by residues Ser21 and 45–46; that span reads KA. Residues Lys45 and 69–73 contribute to the substrate site; that span reads NAIGL. FMN contacts are provided by Asn99 and Asn127. Substrate is bound at residue Asn127. Cys130 functions as the Nucleophile in the catalytic mechanism. The FMN site is built by Lys165 and Ile191. 192 to 193 provides a ligand contact to substrate; that stretch reads NT. Residues Gly217, 243-244, and 265-266 each bind FMN; these read GG and GT.

This sequence belongs to the dihydroorotate dehydrogenase family. Type 1 subfamily. Heterotetramer of 2 PyrK and 2 PyrD type B subunits. FMN serves as cofactor.

It is found in the cytoplasm. It catalyses the reaction (S)-dihydroorotate + NAD(+) = orotate + NADH + H(+). It functions in the pathway pyrimidine metabolism; UMP biosynthesis via de novo pathway; orotate from (S)-dihydroorotate (NAD(+) route): step 1/1. Its function is as follows. Catalyzes the conversion of dihydroorotate to orotate with NAD(+) as electron acceptor. This Bacillus cytotoxicus (strain DSM 22905 / CIP 110041 / 391-98 / NVH 391-98) protein is Dihydroorotate dehydrogenase B (NAD(+)), catalytic subunit (pyrD).